Consider the following 183-residue polypeptide: Phosphinothricin N-acetyltransferase (183 aa).

Residues 8-169 (VEIRPATAAD…DVGFWQRDFE (162 aa)) enclose the N-acetyltransferase domain. Acetyl-CoA-binding positions include 91 to 93 (VYV), 99 to 104 (RLGLGS), and Asn130.

It belongs to the acetyltransferase family. PAT/BAR subfamily.

The enzyme catalyses phosphinothricin + acetyl-CoA = N-acetylphosphinothricin + CoA + H(+). Functionally, inactivates phosphinothricin (PPT) by transfer of an acetyl group from acetyl CoA. This enzyme is an effector of phosphinothricin tripeptide (PTT or bialaphos) resistance. This is Phosphinothricin N-acetyltransferase from Streptomyces viridochromogenes (strain DSM 40736 / JCM 4977 / BCRC 1201 / Tue 494).